The chain runs to 628 residues: DNA mismatch repair protein MutL (628 aa).

A disordered region spans residues 350–402 (GLPFDVSESQGNDNHINNGKSRETKSERELYERRPNPFENRLMKESNSPSVGK). The span at 356 to 368 (SESQGNDNHINNG) shows a compositional bias: polar residues. Basic and acidic residues predominate over residues 369-393 (KSRETKSERELYERRPNPFENRLMK).

Belongs to the DNA mismatch repair MutL/HexB family.

In terms of biological role, this protein is involved in the repair of mismatches in DNA. It is required for dam-dependent methyl-directed DNA mismatch repair. May act as a 'molecular matchmaker', a protein that promotes the formation of a stable complex between two or more DNA-binding proteins in an ATP-dependent manner without itself being part of a final effector complex. The protein is DNA mismatch repair protein MutL of Wolbachia sp. subsp. Brugia malayi (strain TRS).